A 138-amino-acid polypeptide reads, in one-letter code: Cysteine desulfuration protein SufE (138 aa).

Catalysis depends on Cys51, which acts as the Cysteine persulfide intermediate.

It belongs to the SufE family. Homodimer. Interacts with SufS.

The protein localises to the cytoplasm. Its pathway is cofactor biosynthesis; iron-sulfur cluster biosynthesis. Functionally, participates in cysteine desulfuration mediated by SufS. Cysteine desulfuration mobilizes sulfur from L-cysteine to yield L-alanine and constitutes an essential step in sulfur metabolism for biosynthesis of a variety of sulfur-containing biomolecules. Functions as a sulfur acceptor for SufS, by mediating the direct transfer of the sulfur atom from the S-sulfanylcysteine of SufS, an intermediate product of cysteine desulfuration process. The protein is Cysteine desulfuration protein SufE of Sodalis glossinidius (strain morsitans).